We begin with the raw amino-acid sequence, 229 residues long: Uracil-DNA glycosylase (229 aa).

Catalysis depends on Asp70, which acts as the Proton acceptor.

This sequence belongs to the uracil-DNA glycosylase (UDG) superfamily. UNG family.

It is found in the cytoplasm. The catalysed reaction is Hydrolyzes single-stranded DNA or mismatched double-stranded DNA and polynucleotides, releasing free uracil.. Functionally, excises uracil residues from the DNA which can arise as a result of misincorporation of dUMP residues by DNA polymerase or due to deamination of cytosine. The sequence is that of Uracil-DNA glycosylase from Chlamydia trachomatis serovar L2b (strain UCH-1/proctitis).